A 137-amino-acid chain; its full sequence is ATP synthase epsilon chain, chloroplastic (137 aa).

Belongs to the ATPase epsilon chain family. As to quaternary structure, F-type ATPases have 2 components, CF(1) - the catalytic core - and CF(0) - the membrane proton channel. CF(1) has five subunits: alpha(3), beta(3), gamma(1), delta(1), epsilon(1). CF(0) has three main subunits: a, b and c.

The protein resides in the plastid. It localises to the chloroplast thylakoid membrane. Its function is as follows. Produces ATP from ADP in the presence of a proton gradient across the membrane. The chain is ATP synthase epsilon chain, chloroplastic from Oryza nivara (Indian wild rice).